Reading from the N-terminus, the 331-residue chain is L-lactate dehydrogenase A chain (331 aa).

Residues 29 to 57 (GMVG…MEDK) and R98 each bind NAD(+). The substrate site is built by R105, N137, and R168. NAD(+) is bound at residue N137. The Proton acceptor role is filled by H192. Residue T247 coordinates substrate.

It belongs to the LDH/MDH superfamily. LDH family. Homotetramer.

It is found in the cytoplasm. It carries out the reaction (S)-lactate + NAD(+) = pyruvate + NADH + H(+). It participates in fermentation; pyruvate fermentation to lactate; (S)-lactate from pyruvate: step 1/1. Interconverts simultaneously and stereospecifically pyruvate and lactate with concomitant interconversion of NADH and NAD(+). The polypeptide is L-lactate dehydrogenase A chain (ldha) (Paranotothenia magellanica (Maori cod)).